We begin with the raw amino-acid sequence, 117 residues long: Large ribosomal subunit protein bL20 (117 aa).

Belongs to the bacterial ribosomal protein bL20 family.

Functionally, binds directly to 23S ribosomal RNA and is necessary for the in vitro assembly process of the 50S ribosomal subunit. It is not involved in the protein synthesizing functions of that subunit. In Synechocystis sp. (strain ATCC 27184 / PCC 6803 / Kazusa), this protein is Large ribosomal subunit protein bL20 (rplT).